The following is a 354-amino-acid chain: Uroporphyrinogen decarboxylase (354 aa).

Substrate-binding positions include 25–29, D75, Y152, T207, and H330; that span reads RQAGR.

This sequence belongs to the uroporphyrinogen decarboxylase family. In terms of assembly, homodimer.

The protein localises to the cytoplasm. It catalyses the reaction uroporphyrinogen III + 4 H(+) = coproporphyrinogen III + 4 CO2. It participates in porphyrin-containing compound metabolism; protoporphyrin-IX biosynthesis; coproporphyrinogen-III from 5-aminolevulinate: step 4/4. Its function is as follows. Catalyzes the decarboxylation of four acetate groups of uroporphyrinogen-III to yield coproporphyrinogen-III. The protein is Uroporphyrinogen decarboxylase of Xanthomonas oryzae pv. oryzae (strain MAFF 311018).